We begin with the raw amino-acid sequence, 638 residues long: Pentatricopeptide repeat-containing protein At3g49730 (638 aa).

PPR repeat units follow at residues 130-164, 166-200, 201-231, 235-269, 270-304, 305-340, 341-375, 376-410, 411-445, 446-480, 483-513, and 520-554; these read SYEV…NPEL, EPEL…GLEP, DEYV…MREK, NLRY…GLEP, DIVV…GFEP, NVNC…GCEA, DIVT…GVMP, SQVT…GCHP, DLLI…GLSP, GVDT…GIFS, QYGT…ISNK, and NVSA…DLMP. The tract at residues 604–638 is disordered; the sequence is LIEKAKPKGNKEGKKKGTDHQRYKGRGERSRAKAL.

Belongs to the PPR family. P subfamily.

The chain is Pentatricopeptide repeat-containing protein At3g49730 from Arabidopsis thaliana (Mouse-ear cress).